We begin with the raw amino-acid sequence, 243 residues long: Carboxy-S-adenosyl-L-methionine synthase (243 aa).

S-adenosyl-L-methionine-binding positions include Y40, 65 to 67 (GCS), 90 to 91 (DN), 118 to 119 (DI), N133, and R200.

It belongs to the class I-like SAM-binding methyltransferase superfamily. Cx-SAM synthase family. In terms of assembly, homodimer.

The enzyme catalyses prephenate + S-adenosyl-L-methionine = carboxy-S-adenosyl-L-methionine + 3-phenylpyruvate + H2O. Functionally, catalyzes the conversion of S-adenosyl-L-methionine (SAM) to carboxy-S-adenosyl-L-methionine (Cx-SAM). This Shewanella pealeana (strain ATCC 700345 / ANG-SQ1) protein is Carboxy-S-adenosyl-L-methionine synthase.